The chain runs to 383 residues: MLRSSLGLRIPEGMHDLLPDELALQERAEASALDLFKAWAYQKVVTPTLEYGACIQPVEEEEDSFFKLFDRQGHVLVLRPELTTPIARMVSTRMRGTTFPLRLCYAADVFRYSKSHKQEFRQVGVELIGSASPAADAEVVALAIEALRQIGGMDFQINLGHMGIFTGIMAELGVPQEFQLHYQEKLARKDFVGIERLVKDYGFELKVQDVLLKLPHLHGQEDMLDQVLEWSRRPSLLEAVAALRQVYRYLKDFGVQDYVSLDLGILRGFSYYTGAVFEGYVPGVGFPVVEGGRYDALYGEFGEDVPATGFAINLKAIIEQMACSNAESPEVFVCGSDVSQVIAEARKLRQTGKRVEMCLEPLTREQAVASADRKGIKEIVCVR.

It belongs to the class-II aminoacyl-tRNA synthetase family. HisZ subfamily. In terms of assembly, heteromultimer composed of HisG and HisZ subunits.

The protein resides in the cytoplasm. Its pathway is amino-acid biosynthesis; L-histidine biosynthesis; L-histidine from 5-phospho-alpha-D-ribose 1-diphosphate: step 1/9. Required for the first step of histidine biosynthesis. May allow the feedback regulation of ATP phosphoribosyltransferase activity by histidine. The sequence is that of ATP phosphoribosyltransferase regulatory subunit from Desulfitobacterium hafniense (strain DSM 10664 / DCB-2).